The primary structure comprises 482 residues: Wax ester synthase/diacylglycerol acyltransferase 9 (482 aa).

Topologically, residues 1-195 are cytoplasmic; the sequence is MEKKMKEEEE…FRLVLVVCST (195 aa). The active-site Proton acceptor is the His-140. Residues 196-216 traverse the membrane as a helical segment; that stretch reads VRLIWNTLVDSFLCMATIFFL. Topologically, residues 217 to 328 are lumenal; that stretch reads KDTDTPLKGK…AKGSKCRWGN (112 aa). Residues 329–349 traverse the membrane as a helical segment; sequence YISVILFPFTIALQSDPLVYL. The Cytoplasmic segment spans residues 350-366; it reads SNVKSMIDRKKNSLITY. The helical transmembrane segment at 367–387 threads the bilayer; that stretch reads IIYTFSEFVIKAFGINVAVAF. The Lumenal portion of the chain corresponds to 388-482; the sequence is QRKIMLNTTM…LEKGLPNHVN (95 aa). Asn-394 carries an N-linked (GlcNAc...) asparagine glycan.

It in the N-terminal section; belongs to the long-chain O-acyltransferase family. In terms of tissue distribution, mostly expressed in stems and siliques.

It localises to the cell membrane. The protein localises to the endoplasmic reticulum membrane. The catalysed reaction is an acyl-CoA + a 1,2-diacyl-sn-glycerol = a triacyl-sn-glycerol + CoA. It catalyses the reaction a long chain fatty alcohol + a fatty acyl-CoA = a wax ester + CoA. The protein operates within glycerolipid metabolism; triacylglycerol biosynthesis. Its pathway is lipid metabolism. In terms of biological role, bifunctional wax ester synthase/diacylglycerol acyltransferase. Involved in cuticular wax biosynthesis. The polypeptide is Wax ester synthase/diacylglycerol acyltransferase 9 (Arabidopsis thaliana (Mouse-ear cress)).